The following is a 559-amino-acid chain: Intestinal-type alkaline phosphatase (559 aa).

An N-terminal signal peptide occupies residues 1 to 19 (MQGPWVLLLLGLRLQLSLS). Asp-61 is a binding site for Mg(2+). Zn(2+) is bound by residues Asp-61 and Ser-111. Ser-111 functions as the Phosphoserine intermediate in the catalytic mechanism. The cysteines at positions 140 and 202 are disulfide-linked. Asn-141 carries an N-linked (GlcNAc...) asparagine glycan. Ser-174 provides a ligand contact to Mg(2+). Glu-235 contributes to the Ca(2+) binding site. Asn-241 carries N-linked (GlcNAc...) asparagine glycosylation. 3 residues coordinate Ca(2+): Phe-288, Glu-289, and Asp-304. A Mg(2+)-binding site is contributed by Glu-330. Residues Asp-335, His-339, Asp-376, and His-377 each contribute to the Zn(2+) site. Asn-426 carries N-linked (GlcNAc...) asparagine glycosylation. Residue His-450 coordinates Zn(2+). Residues Cys-485 and Cys-492 are joined by a disulfide bond. The tract at residues 496 to 531 (PPADESQTTTTTRQTTITTTTTTTTTTTTPVHNSAR) is disordered. A compositionally biased stretch (low complexity) spans 503–524 (TTTTTRQTTITTTTTTTTTTTT). Asn-528 is lipidated: GPI-anchor amidated asparagine. The propeptide at 529 to 559 (SARSLGPATAPLALALLAGMLMLLLGAPAES) is removed in mature form.

This sequence belongs to the alkaline phosphatase family. Homodimer. It depends on Mg(2+) as a cofactor. Zn(2+) is required as a cofactor. The cofactor is Ca(2+). Intestine and thymus.

It is found in the cell membrane. It carries out the reaction a phosphate monoester + H2O = an alcohol + phosphate. Functionally, alkaline phosphatase that can hydrolyze various phosphate compounds. In Mus musculus (Mouse), this protein is Intestinal-type alkaline phosphatase (Iap).